The sequence spans 1304 residues: Splicing factor 3B subunit 1 (1304 aa).

Disordered stretches follow at residues 100–119 and 124–148; these read QYDPFAEHRPPKIADREDEY and RTMIISPERLDPFADGGKTPDPKMN. Basic and acidic residues predominate over residues 104-119; sequence FAEHRPPKIADREDEY. Thr125 carries the post-translational modification Phosphothreonine. Phosphoserine is present on Ser129. Residue Lys141 is modified to N6-acetyllysine. The residue at position 142 (Thr142) is a Phosphothreonine. A Citrulline modification is found at Arg157. The segment at 173–360 is disordered; sequence AEKAKAGELK…PVLTPGKTPI (188 aa). Residues 190–342 form a U2AF homology region; mediates interaction with RBM39 region; sequence SQPPSKRKRR…KRKSRWDETP (153 aa). Ser194 carries the phosphoserine modification. 3 positions are modified to phosphothreonine: Thr203, Thr207, and Thr211. At Lys214 the chain carries N6-acetyllysine; alternate. A Glycyl lysine isopeptide (Lys-Gly) (interchain with G-Cter in SUMO2); alternate cross-link involves residue Lys214. Phosphothreonine is present on residues Thr223 and Thr227. Residues 223-491 are interaction with PPP1R8; it reads TPGHTPSLRW…VDESTLSPEE (269 aa). Ser229 is modified (phosphoserine). Basic and acidic residues predominate over residues 231 to 241; that stretch reads RWDETPGRAKG. Thr235, Thr244, Thr248, Thr257, Thr261, Thr267, Thr273, and Thr278 each carry phosphothreonine. Ser287 bears the Phosphoserine mark. The segment covering 291 to 304 has biased composition (basic and acidic residues); the sequence is NRWDETPKTERDTP. Phosphothreonine is present on residues Thr296, Thr299, Thr303, and Thr313. Position 322 is a phosphoserine (Ser322). A phosphothreonine mark is found at Thr326 and Thr328. Ser332 carries the post-translational modification Phosphoserine. Residue Thr341 is modified to Phosphothreonine. The span at 342 to 352 shows a compositional bias: polar residues; the sequence is PASQMGGSTPV. 2 positions are modified to phosphoserine: Ser344 and Ser349. A phosphothreonine mark is found at Thr350 and Thr354. Residue Ser400 is modified to Phosphoserine. Residue Lys413 forms a Glycyl lysine isopeptide (Lys-Gly) (interchain with G-Cter in SUMO2); alternate linkage. Residue Lys413 forms a Glycyl lysine isopeptide (Lys-Gly) (interchain with G-Cter in SUMO1); alternate linkage. Residue Thr426 is modified to Phosphothreonine. Lys430 participates in a covalent cross-link: Glycyl lysine isopeptide (Lys-Gly) (interchain with G-Cter in SUMO2). Thr434 is modified (phosphothreonine; by DYRK1A). Thr436 bears the Phosphothreonine mark. Ser488 carries the post-translational modification Phosphoserine. HEAT repeat units follow at residues 529-568, 569-603, 604-641, 643-677, 680-718, 763-801, 843-881, 1010-1048, 1052-1090, 1122-1160, and 1163-1201; these read GPLFNQILPLLMSPTLEDQERHLLVKVIDRILYKLDDLVR, PYVHKILVVIEPLLIDEDYYARVEGREIISNLAKA, AGLATMISTMRPDIDNMDEYVRNTTARAFAVVASALGI, SLLPFLKAVCKSKKSWQARHTGIKIVQQIAILMGC, LPHLRSLVEIIEHGLVDEQQKVRTISALAIAALAEAATP, NYYTREVMLILIREFQSPDEEMKKIVLKVVKQCCGTDGV, KVGAAEIISRIVDDLKDEAEQYRKMVMETIEKIMGNLGA, TPPIKDLLPRLTPILKNRHEKVQENCIDLVGRIADRGAE, AREWMRICFELLELLKAHKKAIRRATVNTFGYIAKAIGP, TCSPFTVLPALMNEYRVPELNVQNGVLKSLSFLFEYIGE, and KDYIYAVTPLLEDALMDRDLVHRQTASAVVQHMSLGVYG. The tract at residues 529–568 is interaction with SF3B14; sequence GPLFNQILPLLMSPTLEDQERHLLVKVIDRILYKLDDLVR. An interaction with PHF5A region spans residues 547-550; sequence QERH. N6-acetyllysine is present on residues Lys554 and Lys562. Residues 1156–1157 form an interaction with PHF5A region; the sequence is EY. The tract at residues 1248-1304 is interaction with SF3B3 and SF3B5; sequence QYCLQGLFHPARKVRDVYWKIYNSIYIGSQDALIAHYPRIYNDDKNTYIRYELDYIL.

It belongs to the SF3B1 family. Component of the 17S U2 SnRNP complex, a ribonucleoprotein complex that contains small nuclear RNA (snRNA) U2 and a number of specific proteins. Part of the SF3B subcomplex of the 17S U2 SnRNP complex. SF3B associates with the splicing subcomplex SF3A and a 12S RNA unit to form the U2 small nuclear ribonucleoproteins complex (U2 snRNP). Within the SF3B complex, interacts directly (via HEAT domain) with SF3B3, SF3B5, SF3B6 and (via HEAT domain) with PHF5A. The SF3B subcomplex interacts with U2AF2. Identified in the spliceosome C complex. Component of the minor (U12-type spliceosome) spliceosome. Within the minor spliceosome complex, interacts with SCNM1 and CRIPT. Component of the B-WICH complex, at least composed of SMARCA5/SNF2H, BAZ1B/WSTF, SF3B1, DEK, MYO1C, ERCC6, MYBBP1A and DDX21. Phosphorylated form interacts with PPP1R8. Interacts with PQBP1. Interacts with RBM17. Interacts with RBM39. Interacts with SETX. Interacts with RBM15. Interacts with USH1G. Interacts with SDE2. Interacts with U2AF1. Interacts with CACTIN. Interacts with ZRSR1. Interacts with CYREN. In terms of processing, phosphorylated. Phosphorylation occurs concomitantly with the splicing catalytic steps. Phosphorylation on Thr-244, Thr-248 and Thr-313 by cyclin-dependent kinases promotes interaction with PPP1R8 during mitosis. Citrullinated by PADI4.

The protein resides in the nucleus. The protein localises to the nucleus speckle. Functionally, component of the 17S U2 SnRNP complex of the spliceosome, a large ribonucleoprotein complex that removes introns from transcribed pre-mRNAs. The 17S U2 SnRNP complex (1) directly participates in early spliceosome assembly and (2) mediates recognition of the intron branch site during pre-mRNA splicing by promoting the selection of the pre-mRNA branch-site adenosine, the nucleophile for the first step of splicing. Within the 17S U2 SnRNP complex, SF3B1 is part of the SF3B subcomplex, which is required for 'A' complex assembly formed by the stable binding of U2 snRNP to the branchpoint sequence in pre-mRNA. Sequence independent binding of SF3A and SF3B subcomplexes upstream of the branch site is essential, it may anchor U2 snRNP to the pre-mRNA. May also be involved in the assembly of the 'E' complex. Also acts as a component of the minor spliceosome, which is involved in the splicing of U12-type introns in pre-mRNAs. Together with other U2 snRNP complex components may also play a role in the selective processing of microRNAs (miRNAs) from the long primary miRNA transcript, pri-miR-17-92. In Homo sapiens (Human), this protein is Splicing factor 3B subunit 1.